The sequence spans 258 residues: Isoprenyl transferase (258 aa).

Residue aspartate 38 is part of the active site. Aspartate 38 is a binding site for Mg(2+). Substrate contacts are provided by residues 39–42 (GNGR), tryptophan 43, arginine 51, histidine 55, and 83–85 (STE). Asparagine 86 functions as the Proton acceptor in the catalytic mechanism. Substrate is bound by residues tryptophan 87, arginine 89, arginine 206, and 212–214 (RIS). Residue glutamate 225 coordinates Mg(2+).

Belongs to the UPP synthase family. As to quaternary structure, homodimer. Requires Mg(2+) as cofactor.

Its function is as follows. Catalyzes the condensation of isopentenyl diphosphate (IPP) with allylic pyrophosphates generating different type of terpenoids. This Bacillus anthracis protein is Isoprenyl transferase.